We begin with the raw amino-acid sequence, 319 residues long: uncharacterized protein (319 aa).

A disordered region spans residues Glu-21 to Gln-70. Polar residues predominate over residues Leu-25–Thr-34. Residues Ser-35–Ser-51 show a composition bias toward low complexity. Positions Thr-61–Gln-70 are enriched in polar residues.

This is an uncharacterized protein from Homo sapiens (Human).